The sequence spans 59 residues: Large ribosomal subunit protein uL30 (59 aa).

This sequence belongs to the universal ribosomal protein uL30 family. In terms of assembly, part of the 50S ribosomal subunit.

In Acetivibrio thermocellus (strain ATCC 27405 / DSM 1237 / JCM 9322 / NBRC 103400 / NCIMB 10682 / NRRL B-4536 / VPI 7372) (Clostridium thermocellum), this protein is Large ribosomal subunit protein uL30.